The following is a 244-amino-acid chain: Orotidine 5'-phosphate decarboxylase (244 aa).

Substrate contacts are provided by residues D18, K43, 73 to 82 (DLKLADIGYI), S130, 182 to 192 (PGVGAQGGKPG), G206, and R207. The active-site Proton donor is K75.

It belongs to the OMP decarboxylase family. Type 1 subfamily. In terms of assembly, homodimer.

It carries out the reaction orotidine 5'-phosphate + H(+) = UMP + CO2. It participates in pyrimidine metabolism; UMP biosynthesis via de novo pathway; UMP from orotate: step 2/2. Functionally, catalyzes the decarboxylation of orotidine 5'-monophosphate (OMP) to uridine 5'-monophosphate (UMP). The polypeptide is Orotidine 5'-phosphate decarboxylase (Aeropyrum pernix (strain ATCC 700893 / DSM 11879 / JCM 9820 / NBRC 100138 / K1)).